We begin with the raw amino-acid sequence, 300 residues long: Probable alpha-L-glutamate ligase (300 aa).

The 184-residue stretch at 104–287 folds into the ATP-grasp domain; sequence LQLLARQGID…IAGRMIEYIE (184 aa). ATP-binding positions include lysine 141, 178-179, aspartate 187, and 211-213; these read EY and RSN. Mg(2+) is bound by residues aspartate 248, glutamate 260, and asparagine 262. Aspartate 248, glutamate 260, and asparagine 262 together coordinate Mn(2+).

This sequence belongs to the RimK family. Requires Mg(2+) as cofactor. The cofactor is Mn(2+).

This Serratia proteamaculans (strain 568) protein is Probable alpha-L-glutamate ligase.